The sequence spans 122 residues: Alkaline proteinase inhibitor (122 aa).

Positions 1-25 (MPRFSHLIGCVWQVLFVSAGAQAMA) are cleaved as a signal peptide. The segment at 101–122 (QKEGEYTGRTPSGADVTLQRTN) is disordered.

This sequence belongs to the protease inhibitor I38 family.

It is found in the periplasm. Functionally, inhibitor of the alkaline protease. The chain is Alkaline proteinase inhibitor (inh) from Pseudomonas tolaasii.